The sequence spans 320 residues: Taste receptor type 2 member 109 (320 aa).

Residues Met1–Asn14 are Extracellular-facing. Residues Val15–Ala35 traverse the membrane as a helical segment. Topologically, residues Leu36–Arg62 are cytoplasmic. A helical membrane pass occupies residues Ile63–Ala83. At Ser84 to Asn94 the chain is on the extracellular side. A helical transmembrane segment spans residues Leu95 to Phe115. At Leu116–Lys135 the chain is on the cytoplasmic side. The chain crosses the membrane as a helical span at residues Val136–Asn156. Residues Leu157 to His191 are Extracellular-facing. A glycan (N-linked (GlcNAc...) asparagine) is linked at Asn170. A helical membrane pass occupies residues Ile192–Ser212. Residues Leu213–Gln240 lie on the Cytoplasmic side of the membrane. A helical transmembrane segment spans residues Thr241–Trp261. At Lys262–Leu270 the chain is on the extracellular side. A helical transmembrane segment spans residues Phe271–Ile291. Residues Leu292–Leu320 are Cytoplasmic-facing.

It belongs to the G-protein coupled receptor T2R family.

The protein localises to the membrane. Putative taste receptor which may play a role in the perception of bitterness. This chain is Taste receptor type 2 member 109, found in Rattus norvegicus (Rat).